Consider the following 328-residue polypeptide: Putative lipase LIH1 (328 aa).

Serine 181 serves as the catalytic Nucleophile. Active-site charge relay system residues include aspartate 253 and histidine 315.

Belongs to the AB hydrolase superfamily. Lipase family.

The catalysed reaction is a triacylglycerol + H2O = a diacylglycerol + a fatty acid + H(+). Its function is as follows. Lipases catalyze the hydrolysis of the ester bond of tri-, di- and monoglycerides of long-chain fatty acids into fatty acids and glycerol. The polypeptide is Putative lipase LIH1 (Saccharomyces cerevisiae (strain ATCC 204508 / S288c) (Baker's yeast)).